The primary structure comprises 906 residues: Centromere protein C (906 aa).

2 stretches are compositionally biased toward polar residues: residues 56-74 (SLTSSTQKKKANYSQSSSK) and 87-96 (SSRTGEASLQ). Disordered regions lie at residues 56-115 (SLTS…NEVH) and 141-169 (QKAASPAGQKRVASVSRSPVDRQASNKNI). Phosphoserine occurs at positions 71 and 94. A compositionally biased stretch (low complexity) spans 97-108 (ASAEPSEAAGGS). Residues Lys-150 and Lys-182 each participate in a glycyl lysine isopeptide (Lys-Gly) (interchain with G-Cter in SUMO2) cross-link. Positions 197-224 (VEDNLSKGQEGTSSEITQKRDDLSSDVQ) are disordered. Positions 202–212 (SKGQEGTSSEI) are enriched in polar residues. Residues 228-242 (KKNFSELFLETVKRK) carry the Nuclear localization signal motif. Residues Lys-229, Lys-240, Lys-242, and Lys-266 each participate in a glycyl lysine isopeptide (Lys-Gly) (interchain with G-Cter in SUMO2) cross-link. Disordered regions lie at residues 294 to 320 (RHLSAHKPSPENTALLQGKKSREKSHS), 341 to 596 (AQLS…SLAI), and 623 to 671 (EYTS…EQDQ). Residues Ser-302, Ser-344, Ser-363, and Ser-404 each carry the phosphoserine modification. Positions 402 to 424 (GQSSWENSNVSNTGQDKLQINSK) are enriched in polar residues. Positions 426-450 (NMKDCEEVRNEPNPKKQKPALENKK) are enriched in basic and acidic residues. The Nuclear localization signal signature appears at 449–466 (KKKTNSTQTNKEKSGKKF). Low complexity predominate over residues 465–474 (KFFSGGSKNK). Residues 481–494 (TLTSRRSCRISQRP) are compositionally biased toward polar residues. Ser-495 is subject to Phosphoserine. The span at 496-512 (EWWRVKSDESSVDRNPS) shows a compositional bias: basic and acidic residues. Lys-501 is covalently cross-linked (Glycyl lysine isopeptide (Lys-Gly) (interchain with G-Cter in SUMO2)). Ser-505 bears the Phosphoserine mark. The span at 523 to 546 (NKKKQTKRNHVSKRAGKKPGSSKR) shows a compositional bias: basic residues. The Nuclear localization signal motif lies at 525 to 540 (KKQTKRNHVSKRAGKK). The span at 626–637 (SKTQMESASNSE) shows a compositional bias: polar residues. Residue Lys-640 forms a Glycyl lysine isopeptide (Lys-Gly) (interchain with G-Cter in SUMO2) linkage. A phosphoserine mark is found at Ser-647 and Ser-673. Lys-692 is covalently cross-linked (Glycyl lysine isopeptide (Lys-Gly) (interchain with G-Cter in SUMO2)). The tract at residues 702–724 (VRRSNRIRLKPLEYWRGERVDYQ) is MIF2 homology domain II. A phosphoserine mark is found at Ser-728 and Ser-737. The short motif at 744–762 (KIKAQRNLGKVNKKVTKKP) is the Nuclear localization signal element. Lys-770 participates in a covalent cross-link: Glycyl lysine isopeptide (Lys-Gly) (interchain with G-Cter in SUMO2). Positions 853-906 (LVFYVNFGDLLCTLHETPYKLTTGDSFYVPSGNHYNIKNLLNVESSLLFTQIKR) are MIF2 homology domain III.

Belongs to the CENP-C/MIF2 family. Oligomer. Component of the CENPA-NAC complex, at least composed of CENPA, CENPC, CENPH, CENPM, CENPN, CENPT and CENPU. The CENPA-NAC complex interacts with the CENPA-CAD complex, composed of CENPI, CENPK, CENPL, CENPO, CENPP, CENPQ, CENPR and CENPS. Binds to DAXX. Interacts with DNMT3B. Interacts directly with CENPA. Identified in a centromere complex containing histones H2A, H2B and H4, and at least CENPA, CENPB, CENPC, CENPT, CENPN, HJURP, SUPT16H, SSRP1 and RSF1. Interacts with MEIKIN.

The protein resides in the nucleus. It is found in the chromosome. It localises to the centromere. The protein localises to the kinetochore. Functionally, component of the CENPA-NAC (nucleosome-associated) complex, a complex that plays a central role in assembly of kinetochore proteins, mitotic progression and chromosome segregation. The CENPA-NAC complex recruits the CENPA-CAD (nucleosome distal) complex and may be involved in incorporation of newly synthesized CENPA into centromeres. CENPC recruits DNA methylation and DNMT3B to both centromeric and pericentromeric satellite repeats and regulates the histone code in these regions. This is Centromere protein C (Cenpc) from Mus musculus (Mouse).